Here is a 920-residue protein sequence, read N- to C-terminus: Histone-lysine N-methyltransferase, H3 lysine-4 specific (920 aa).

The region spanning 94–179 is the RRM domain; that stretch reads TQVFVSNISP…KPLSVVLDRD (86 aa). The segment covering 205-216 has biased composition (basic and acidic residues); that stretch reads KQRFEREDESSR. Disordered stretches follow at residues 205–242 and 448–485; these read KQRFEREDESSRQKLSAAMNEDIPPWRQPSKNSQTLSN and KRVDSSKMNLSAGSKTKSKLQRRRRRRHEARPLHYQLN. Polar residues-rich tracts occupy residues 233-242 and 453-462; these read PSKNSQTLSN and SKMNLSAGSK. A compositionally biased stretch (basic residues) spans 463–476; sequence TKSKLQRRRRRRHE. The short motif at 749–754 is the RxxxRR motif element; it reads RVNNRR. Positions 781–898 constitute an SET domain; it reads KQLHFGPSRI…HGEELTYDYK (118 aa). Tyrosine 897 provides a ligand contact to S-adenosyl-L-methionine. The region spanning 904–920 is the Post-SET domain; that stretch reads DKIPCLCGAPTCRGYLN.

The protein belongs to the class V-like SAM-binding methyltransferase superfamily. In terms of assembly, component of the Set1C/COMPASS complex composed of ash2, sdc1, set1, shg1, spp1, swd1, swd2 and swd3.

Its subcellular location is the nucleus. It is found in the chromosome. The catalysed reaction is L-lysyl(4)-[histone H3] + 3 S-adenosyl-L-methionine = N(6),N(6),N(6)-trimethyl-L-lysyl(4)-[histone H3] + 3 S-adenosyl-L-homocysteine + 3 H(+). It catalyses the reaction N(6)-methyl-L-lysyl(4)-[histone H3] + S-adenosyl-L-methionine = N(6),N(6)-dimethyl-L-lysyl(4)-[histone H3] + S-adenosyl-L-homocysteine + H(+). It carries out the reaction N(6),N(6)-dimethyl-L-lysyl(4)-[histone H3] + S-adenosyl-L-methionine = N(6),N(6),N(6)-trimethyl-L-lysyl(4)-[histone H3] + S-adenosyl-L-homocysteine + H(+). Functionally, catalytic component of the COMPASS (Set1C) complex that specifically mono-, di- and trimethylates histone H3 to form H3K4me1/2/3. Binds RNA which might negatively affect its histone methyltransferase activity. COMPASS recognizes ubiquitinated H2B on one face of the nucleosome which stimulates the methylation of H3 on the opposing face. Methylation promotes maintenance of active chromatin states at euchromatic chromosomal domains and is present throughout the cell cycle. Plays a role in telomere maintenance and DNA repair in an ATM kinase rad3-dependent pathway. Required for efficient telomeric and centromeric silencing. In Schizosaccharomyces pombe (strain 972 / ATCC 24843) (Fission yeast), this protein is Histone-lysine N-methyltransferase, H3 lysine-4 specific.